The primary structure comprises 147 residues: Hemoglobin subunit delta (147 aa).

In terms of domain architecture, Globin spans 3–147 (HLTPEEKAAV…VATALAHKYH (145 aa)). Residues H64 and H93 each coordinate heme b.

It belongs to the globin family. In terms of assembly, heterotetramer of two delta chains and two alpha chains. Red blood cells.

This is Hemoglobin subunit delta (HBD) from Ateles geoffroyi (Black-handed spider monkey).